Consider the following 269-residue polypeptide: MDGNVLLAFGLTLFAGLATGVGSLIAFFTSRTNTKFLSLALGFSAGVMIYVSLVEIFVKAKDALTNALGNTNGYWMTIAGFFGGMLFIALIDKFIPKSSNPHEVKLVEDVNAIKPQVNEDHLMKMGIFTALAIGIHNFPEGIATFMSAINDPNVGIAIAIAVAIHNIPEGIAVSVPIFFATGNRRKAFKLSFLSGLAEPVGALVAFLLLMPFLTDVMFGIIFAGVAGIMVFISLDELLPAAQRYDETHLSMYGLVGGMAVMAISLVLLV.

A run of 8 helical transmembrane segments spans residues V5–I25, S38–V58, W75–I95, M125–F145, I158–F178, L190–M210, F212–I232, and L249–V269. Fe(2+) contacts are provided by N137 and E140. Residues E140 and H165 each contribute to the Zn(2+) site. Fe(2+) is bound by residues N166, E169, and E198. E169 is a Zn(2+) binding site.

It belongs to the ZIP transporter (TC 2.A.5) family. ZupT subfamily.

The protein resides in the cell membrane. It carries out the reaction Zn(2+)(in) = Zn(2+)(out). Mediates zinc uptake. May also transport other divalent cations. The polypeptide is Zinc transporter ZupT (Lysinibacillus sphaericus (strain C3-41)).